A 458-amino-acid polypeptide reads, in one-letter code: Bifunctional protein GlmU (458 aa).

The segment at 1–229 is pyrophosphorylase; the sequence is MNKFAIVLAA…FDESLGVNDR (229 aa). UDP-N-acetyl-alpha-D-glucosamine contacts are provided by residues 8 to 11, Lys-22, Gln-72, and 77 to 78; these read LAAG and GT. Asp-102 lines the Mg(2+) pocket. The UDP-N-acetyl-alpha-D-glucosamine site is built by Gly-139, Glu-154, Asn-169, and Asn-227. Position 227 (Asn-227) interacts with Mg(2+). The interval 230–250 is linker; sequence VALSQAEGTMRKRINHEHMVN. Residues 251–458 are N-acetyltransferase; sequence GVTLIDPATT…AKKMPHYRGQ (208 aa). Residues Arg-332 and Lys-350 each contribute to the UDP-N-acetyl-alpha-D-glucosamine site. Catalysis depends on His-362, which acts as the Proton acceptor. Tyr-365 and Asn-376 together coordinate UDP-N-acetyl-alpha-D-glucosamine. The acetyl-CoA site is built by Ala-379, Ser-404, Ala-422, and Arg-439.

It in the N-terminal section; belongs to the N-acetylglucosamine-1-phosphate uridyltransferase family. The protein in the C-terminal section; belongs to the transferase hexapeptide repeat family. Homotrimer. Requires Mg(2+) as cofactor.

It is found in the cytoplasm. It carries out the reaction alpha-D-glucosamine 1-phosphate + acetyl-CoA = N-acetyl-alpha-D-glucosamine 1-phosphate + CoA + H(+). The catalysed reaction is N-acetyl-alpha-D-glucosamine 1-phosphate + UTP + H(+) = UDP-N-acetyl-alpha-D-glucosamine + diphosphate. The protein operates within nucleotide-sugar biosynthesis; UDP-N-acetyl-alpha-D-glucosamine biosynthesis; N-acetyl-alpha-D-glucosamine 1-phosphate from alpha-D-glucosamine 6-phosphate (route II): step 2/2. Its pathway is nucleotide-sugar biosynthesis; UDP-N-acetyl-alpha-D-glucosamine biosynthesis; UDP-N-acetyl-alpha-D-glucosamine from N-acetyl-alpha-D-glucosamine 1-phosphate: step 1/1. It functions in the pathway bacterial outer membrane biogenesis; LPS lipid A biosynthesis. Functionally, catalyzes the last two sequential reactions in the de novo biosynthetic pathway for UDP-N-acetylglucosamine (UDP-GlcNAc). The C-terminal domain catalyzes the transfer of acetyl group from acetyl coenzyme A to glucosamine-1-phosphate (GlcN-1-P) to produce N-acetylglucosamine-1-phosphate (GlcNAc-1-P), which is converted into UDP-GlcNAc by the transfer of uridine 5-monophosphate (from uridine 5-triphosphate), a reaction catalyzed by the N-terminal domain. This Lactococcus lactis subsp. cremoris (strain SK11) protein is Bifunctional protein GlmU.